We begin with the raw amino-acid sequence, 157 residues long: MSDEEHTFENADAGASATYPMQCSALRKNGFVVIKGRPCKIVDMSTSKTGKHGHAKVHLVTLDIFTGKKLEDLSPSTHNLEVPFVKRSEYQLLDIDDGYLSLMTMDGETKDDVKAPEGELGDSMQAAFDEGKDLMVTIISAMGEEAAISFKEAPRSD.

Ser2 bears the N-acetylserine mark. Residue Ser2 is modified to Phosphoserine. A Phosphothreonine modification is found at Thr7. Residue Lys51 is modified to Hypusine. A Phosphoserine modification is found at Ser74. Residue Lys86 forms a Glycyl lysine isopeptide (Lys-Gly) (interchain with G-Cter in ubiquitin) linkage.

It belongs to the eIF-5A family. Homodimer. Binds to 80S ribosomes. Actively translating ribosomes show mutually exclusive binding of eIF5a (HYP2 or ANB1) and EFT1/eEF2. Interacts with DYS1 and LIA1. In terms of processing, lys-51 undergoes hypusination, a unique post-translational modification that consists in the addition of a butylamino group from spermidine to lysine side chain, leading to the formation of the unusual amino acid hypusine. eIF-5As are the only known proteins to undergo this modification, which is essential for their function.

The protein localises to the cytoplasm. Translation factor that promotes translation elongation and termination, particularly upon ribosome stalling at specific amino acid sequence contexts. Binds between the exit (E) and peptidyl (P) site of the ribosome and promotes rescue of stalled ribosome: specifically required for efficient translation of polyproline-containing peptides as well as other motifs that stall the ribosome. Acts as ribosome quality control (RQC) cofactor by joining the RQC complex to facilitate peptidyl transfer during CAT tailing step. Involved in actin dynamics and cell cycle progression, mRNA decay and probably in a pathway involved in stress response and maintenance of cell wall integrity. The polypeptide is Eukaryotic translation initiation factor 5A-2 (ANB1) (Saccharomyces cerevisiae (strain ATCC 204508 / S288c) (Baker's yeast)).